A 394-amino-acid chain; its full sequence is Phosphoglycerate kinase (394 aa).

Residues Asp-21–Asn-23, Arg-37, His-60–Arg-63, Arg-119, and Arg-152 each bind substrate. Residues Lys-202, Glu-324, and Gly-350–Ser-353 each bind ATP.

This sequence belongs to the phosphoglycerate kinase family. In terms of assembly, monomer.

It localises to the cytoplasm. It carries out the reaction (2R)-3-phosphoglycerate + ATP = (2R)-3-phospho-glyceroyl phosphate + ADP. It participates in carbohydrate degradation; glycolysis; pyruvate from D-glyceraldehyde 3-phosphate: step 2/5. The protein is Phosphoglycerate kinase of Carboxydothermus hydrogenoformans (strain ATCC BAA-161 / DSM 6008 / Z-2901).